A 235-amino-acid polypeptide reads, in one-letter code: Octanoyltransferase LIP2, mitochondrial (235 aa).

The N-terminal 32 residues, 1 to 32 (MRSPRTLEVWKLGTVNYLKSLKLQEKLVSERK), are a transit peptide targeting the mitochondrion. The region spanning 34 to 218 (HQIPDTLLSL…CLAKAFSYDD (185 aa)) is the BPL/LPL catalytic domain. Substrate-binding positions include 79–86 (RGGDITFH), 147–149 (AIG), and 160–162 (GLA). Cys-178 (acyl-thioester intermediate) is an active-site residue.

This sequence belongs to the LipB family. In terms of tissue distribution, expressed in leaves. Expressed in roots, rosette leaves, cauline leaves, stems and siliques.

The protein resides in the mitochondrion. It catalyses the reaction octanoyl-[ACP] + L-lysyl-[protein] = N(6)-octanoyl-L-lysyl-[protein] + holo-[ACP] + H(+). It participates in protein modification; protein lipoylation via endogenous pathway; protein N(6)-(lipoyl)lysine from octanoyl-[acyl-carrier-protein]: step 1/2. Catalyzes the transfer of endogenously produced octanoic acid from octanoyl-acyl-carrier-protein onto the lipoyl domains of lipoate-dependent enzymes. Lipoyl-ACP can also act as a substrate although octanoyl-ACP is likely to be the physiological substrate. Together with LIP1 is essential for mitochondrial protein lipoylation during seed development. Required for the lipoylation of mitochondrial 2-oxoglutarate dehydrogenase component E2 proteins in leaves and roots. In Arabidopsis thaliana (Mouse-ear cress), this protein is Octanoyltransferase LIP2, mitochondrial.